Here is a 440-residue protein sequence, read N- to C-terminus: MSEFSQTVPELVAWARKNDFSISLPVDRLSFLLAVATLNGERLDGEMSEGELVDAFRHVSDAFEQTSETIGVRANNAINDMVRQRLLNRFTSEQAEGNAIYRLTPLGIGITDYYIRQREFSTLRLSMQLSIVAGELKRAADAAAEGGDEFHWHRNVYAPLKYSVAEIFDSIDLTQRIMDEQQQQVKDDIAQLLNKDWRAAISSCELLLSETSGTLRELQDTLEAAGDKLQANLLRIQDATMTHDDLHVVDRLVFDLQSKLDRIISWGQQSIDLWIGYDRHVHKFIRTAIDMDKNRVFAQRLRQSVQTYFDDPWALTYANADRLLDMRDEEMALRDDEVTGEFPPDLEYEEFNEIREQLAAIIEEQLAIYKTRQTPLDLGLVVREYLAQYPRARHFDVARIVIDQAVRLGVAQADFTGLPAKWQPINDYGAKVQAHVIDKY.

Residues 208–236 (LSETSGTLRELQDTLEAAGDKLQANLLRI) form a leucine-zipper region.

This sequence belongs to the MukF family. In terms of assembly, interacts, and probably forms a ternary complex, with MukE and MukB via its C-terminal region. The complex formation is stimulated by calcium or magnesium. It is required for an interaction between MukE and MukB.

It is found in the cytoplasm. The protein resides in the nucleoid. In terms of biological role, involved in chromosome condensation, segregation and cell cycle progression. May participate in facilitating chromosome segregation by condensation DNA from both sides of a centrally located replisome during cell division. Not required for mini-F plasmid partitioning. Probably acts via its interaction with MukB and MukE. Overexpression results in anucleate cells. It has a calcium binding activity. The sequence is that of Chromosome partition protein MukF from Salmonella gallinarum (strain 287/91 / NCTC 13346).